Reading from the N-terminus, the 285-residue chain is Ribosomal RNA small subunit methyltransferase A (285 aa).

Asparagine 30, leucine 32, glycine 57, glutamate 78, aspartate 101, and asparagine 121 together coordinate S-adenosyl-L-methionine.

Belongs to the class I-like SAM-binding methyltransferase superfamily. rRNA adenine N(6)-methyltransferase family. RsmA subfamily.

Its subcellular location is the cytoplasm. It carries out the reaction adenosine(1518)/adenosine(1519) in 16S rRNA + 4 S-adenosyl-L-methionine = N(6)-dimethyladenosine(1518)/N(6)-dimethyladenosine(1519) in 16S rRNA + 4 S-adenosyl-L-homocysteine + 4 H(+). Specifically dimethylates two adjacent adenosines (A1518 and A1519) in the loop of a conserved hairpin near the 3'-end of 16S rRNA in the 30S particle. May play a critical role in biogenesis of 30S subunits. The sequence is that of Ribosomal RNA small subunit methyltransferase A from Treponema pallidum (strain Nichols).